The sequence spans 582 residues: Vacuolar basic amino acid transporter 5 (582 aa).

The Cytoplasmic segment spans residues 1 to 44 (MEETKYSSQQEIEGACGSDASLNARGSNDSPMGLSLYLCLASLT). Residues 45–65 (LVLFITALDILIVGTIIDVVA) form a helical membrane-spanning segment. Residues 66 to 80 (EQFGNYSKTGWLVTG) lie on the Vacuolar side of the membrane. The N-linked (GlcNAc...) asparagine glycan is linked to N70. A helical membrane pass occupies residues 81 to 101 (YSLPNAILSLIWGRFASIIGF). Residues 102–104 (QHS) are Cytoplasmic-facing. A helical membrane pass occupies residues 105-125 (LILAILIFEAGSLIAALASSM). Residues 126–132 (NMLIFGR) are Vacuolar-facing. Residues 133–153 (VVAGVGGSGLQTLCFVIGCTM) traverse the membrane as a helical segment. At 154-160 (VGERSRP) the chain is on the cytoplasmic side. The helical transmembrane segment at 161 to 181 (LVISILSCAFAVAAIVGPIIG) threads the bilayer. Over 182–191 (GAFTTHVTWR) the chain is Vacuolar. Residues 192–212 (WCFYINLPIGGLAIIMFLLTY) traverse the membrane as a helical segment. The Cytoplasmic segment spans residues 213–256 (KAENKGILQQIKDAIGTISSFTFSKFRHQVNFKRLMNGIIFKFD). The chain crosses the membrane as a helical span at residues 257–277 (FFGFALCSAGLVLFLLGLTFG). Over 278-287 (GNKYSWNSGQ) the chain is Vacuolar. Residues 288–308 (VITYLVLGVLLFIFSLVYDFF) form a helical membrane-spanning segment. Topologically, residues 309–329 (LFDKFNPEPDNISYRPLLLRR) are cytoplasmic. A helical transmembrane segment spans residues 330–350 (LVAKPAIIIVNMVTFLLCTGY). The Vacuolar portion of the chain corresponds to 351-372 (NGQMIYSVQFFQLIFASSAWKA). The chain crosses the membrane as a helical span at residues 373 to 393 (GLHLIPIVITNVIAAIASGVI). Residues 394 to 401 (TKKLGLVK) lie on the Cytoplasmic side of the membrane. Residues 402-422 (PLLIFGGVLGVIGAGLMTLMT) traverse the membrane as a helical segment. N-linked (GlcNAc...) asparagine glycosylation occurs at N423. Over 423-430 (NTSTKSTQ) the chain is Vacuolar. A helical transmembrane segment spans residues 431–451 (IGVLLLPGFSLGFALQASLMS). At 452-469 (AQLQITKDRPEAAMDFIE) the chain is on the cytoplasmic side. A helical transmembrane segment spans residues 470–492 (VTAFNTFMKSLGTTLGGVLSTTV). Over 493 to 539 (FSASFHNKVSRAHLEPYEGKTVDDMILYRLQNYDGSHSTIGNILSDS) the chain is Vacuolar. Residues 540-560 (IKNVFWMDLGFYALGFLFCSF) form a helical membrane-spanning segment. Residues 561 to 582 (SSNKKLIIPKKDDTPEDNLEDK) are Cytoplasmic-facing.

Belongs to the major facilitator superfamily.

The protein resides in the vacuole membrane. Transporter required for vacuolar uptake of basic amino acids. The protein is Vacuolar basic amino acid transporter 5 (VBA5) of Saccharomyces cerevisiae (strain ATCC 204508 / S288c) (Baker's yeast).